The following is a 319-amino-acid chain: Acetyl-coenzyme A carboxylase carboxyl transferase subunit alpha (319 aa).

Residues 35–296 (NIDEEVHRLR…KAQLLADLAD (262 aa)) form the CoA carboxyltransferase C-terminal domain.

Belongs to the AccA family. Acetyl-CoA carboxylase is a heterohexamer composed of biotin carboxyl carrier protein (AccB), biotin carboxylase (AccC) and two subunits each of ACCase subunit alpha (AccA) and ACCase subunit beta (AccD).

It is found in the cytoplasm. It carries out the reaction N(6)-carboxybiotinyl-L-lysyl-[protein] + acetyl-CoA = N(6)-biotinyl-L-lysyl-[protein] + malonyl-CoA. It functions in the pathway lipid metabolism; malonyl-CoA biosynthesis; malonyl-CoA from acetyl-CoA: step 1/1. Functionally, component of the acetyl coenzyme A carboxylase (ACC) complex. First, biotin carboxylase catalyzes the carboxylation of biotin on its carrier protein (BCCP) and then the CO(2) group is transferred by the carboxyltransferase to acetyl-CoA to form malonyl-CoA. The chain is Acetyl-coenzyme A carboxylase carboxyl transferase subunit alpha from Klebsiella pneumoniae subsp. pneumoniae (strain ATCC 700721 / MGH 78578).